Consider the following 600-residue polypeptide: Novobiocin biosynthesis protein H (600 aa).

The disordered stretch occupies residues 505 to 526; the sequence is GGKTDRAGLPDPVKATQPAGLG. Residues 526-600 form the Carrier domain; that stretch reads GPRTPAEKVL…QLAAIATLEE (75 aa). Serine 561 carries the post-translational modification O-(pantetheine 4'-phosphoryl)serine.

Belongs to the ATP-dependent AMP-binding enzyme family.

Its pathway is antibiotic biosynthesis; novobiocin biosynthesis. Its function is as follows. Together with NovI, involved in the formation of a beta-OH-Tyr intermediate in the novobiocin biosynthesis pathway, an aminocoumarin family antibiotic that targets bacterial DNA gyrases. The ATP-dependent AMP-binding region activates L-Tyr as L-tyrosyl-AMP and then transfers the L-tyrosyl group to the acyl carrier domain through thioester formation to form a tyrosyl-S intermediate that is covalently tethered to NovH (L-Tyr-S-NovH). In Streptomyces niveus (Streptomyces spheroides), this protein is Novobiocin biosynthesis protein H (novH).